The following is a 138-amino-acid chain: Basic phospholipase A2 homolog G6K49 (138 aa).

The signal sequence occupies residues 1–16 (MRTLWIMAVLLLGVEG). Disulfide bonds link cysteine 42–cysteine 132, cysteine 44–cysteine 60, cysteine 59–cysteine 112, cysteine 65–cysteine 138, cysteine 66–cysteine 105, cysteine 73–cysteine 98, and cysteine 91–cysteine 103. The interval 122 to 133 (KKHRVTVKFLCK) is important for membrane-damaging activities in eukaryotes and bacteria; heparin-binding.

This sequence belongs to the phospholipase A2 family. Group II subfamily. K49 sub-subfamily. As to quaternary structure, homodimer; non-covalently linked. Expressed by the venom gland.

Its subcellular location is the secreted. Functionally, snake venom phospholipase A2 (PLA2) that lacks enzymatic activity. Displays myotoxic activities. A model of myotoxic mechanism has been proposed: an apo Lys49-PLA2 is activated by the entrance of a hydrophobic molecule (e.g. fatty acid) at the hydrophobic channel of the protein leading to a reorientation of a monomer. This reorientation causes a transition between 'inactive' to 'active' states, causing alignment of C-terminal and membrane-docking sites (MDoS) side-by-side and putting the membrane-disruption sites (MDiS) in the same plane, exposed to solvent and in a symmetric position for both monomers. The MDoS region stabilizes the toxin on membrane by the interaction of charged residues with phospholipid head groups. Subsequently, the MDiS region destabilizes the membrane with penetration of hydrophobic residues. This insertion causes a disorganization of the membrane, allowing an uncontrolled influx of ions (i.e. calcium and sodium), and eventually triggering irreversible intracellular alterations and cell death. In Calloselasma rhodostoma (Malayan pit viper), this protein is Basic phospholipase A2 homolog G6K49.